The following is a 396-amino-acid chain: DNA excision repair protein ERCC-8 (396 aa).

WD repeat units lie at residues 33–73, 88–129, 133–173, 177–216, 235–274, 281–321, and 325–363; these read NKDR…LYDL, CSIG…VWDT, QTAD…LCDL, SCSHILQGHRQEILAVSWSPRYDYILATASADSRVKLWDV, QAVESANTAHNGKVNGLCFTSDGLHLLTVGTDNRMRLWNS, LVNY…VYTV, and EQITMLKGHYKTVDCCVFQSNFQELYSGSRDCNILAWVP. Positions 371 to 396 are disordered; that stretch reads DDDETTTKSQLNPAFEDAWSSSDEEG. Serine 390, serine 391, and serine 392 each carry phosphoserine.

As to quaternary structure, part of the CSA complex (also named DCX(ERCC8) complex), a DCX E3 ubiquitin-protein ligase complex containing ERCC8, RBX1, DDB1 and CUL4A; the CSA complex interacts with RNA polymerase II; upon UV irradiation it interacts with the COP9 signalosome and preferentially with the hyperphosphorylated form of RNA polymerase II. Interacts with ERCC6/CSB (via CIM motif); promoting recruitment to lesion-stalled RNA polymerase II (Pol II). Interacts with KIAA1530/UVSSA. Interacts with a subunit of RNA polymerase II TFIIH.

It localises to the nucleus. The protein localises to the chromosome. Its subcellular location is the nucleus matrix. The protein operates within protein modification; protein ubiquitination. In terms of biological role, substrate-recognition component of the CSA complex, a DCX (DDB1-CUL4-X-box) E3 ubiquitin-protein ligase complex, involved in transcription-coupled nucleotide excision repair (TC-NER), a process during which RNA polymerase II-blocking lesions are rapidly removed from the transcribed strand of active genes. Following recruitment to lesion-stalled RNA polymerase II (Pol II), the CSA complex mediates ubiquitination of Pol II subunit POLR2A/RPB1 at 'Lys-1268', a critical TC-NER checkpoint, governing RNA Pol II stability and initiating DNA damage excision by TFIIH recruitment. The CSA complex also promotes the ubiquitination and subsequent proteasomal degradation of ERCC6/CSB in a UV-dependent manner; ERCC6 degradation is essential for the recovery of RNA synthesis after transcription-coupled repair. Also plays a role in DNA double-strand breaks (DSSBs) repair by non-homologous end joining (NHEJ). The sequence is that of DNA excision repair protein ERCC-8 from Homo sapiens (Human).